The primary structure comprises 181 residues: MRILGIDPGLRTTGFGVLERHGHQLVYVASGTIKSDGNADLPSRLKTLYDGVSELVRTYRPDCASIEKVFVNVNPQSTLLLGQARGAVICGLMSGNLPVFEYTALQLKQAVVGYGRANKDQVQDMVVRLLNLEGRPGTDAADALGVAICHAHGGETLAAMAGLAPQLARKGLRVRRGRLVG.

Active-site residues include aspartate 7, glutamate 67, and aspartate 139. 3 residues coordinate Mg(2+): aspartate 7, glutamate 67, and aspartate 139.

It belongs to the RuvC family. As to quaternary structure, homodimer which binds Holliday junction (HJ) DNA. The HJ becomes 2-fold symmetrical on binding to RuvC with unstacked arms; it has a different conformation from HJ DNA in complex with RuvA. In the full resolvosome a probable DNA-RuvA(4)-RuvB(12)-RuvC(2) complex forms which resolves the HJ. Mg(2+) is required as a cofactor.

The protein localises to the cytoplasm. The catalysed reaction is Endonucleolytic cleavage at a junction such as a reciprocal single-stranded crossover between two homologous DNA duplexes (Holliday junction).. In terms of biological role, the RuvA-RuvB-RuvC complex processes Holliday junction (HJ) DNA during genetic recombination and DNA repair. Endonuclease that resolves HJ intermediates. Cleaves cruciform DNA by making single-stranded nicks across the HJ at symmetrical positions within the homologous arms, yielding a 5'-phosphate and a 3'-hydroxyl group; requires a central core of homology in the junction. The consensus cleavage sequence is 5'-(A/T)TT(C/G)-3'. Cleavage occurs on the 3'-side of the TT dinucleotide at the point of strand exchange. HJ branch migration catalyzed by RuvA-RuvB allows RuvC to scan DNA until it finds its consensus sequence, where it cleaves and resolves the cruciform DNA. This chain is Crossover junction endodeoxyribonuclease RuvC, found in Ralstonia nicotianae (strain ATCC BAA-1114 / GMI1000) (Ralstonia solanacearum).